A 377-amino-acid chain; its full sequence is Histidinol-phosphate aminotransferase (377 aa).

Residue lysine 230 is modified to N6-(pyridoxal phosphate)lysine.

This sequence belongs to the class-II pyridoxal-phosphate-dependent aminotransferase family. Histidinol-phosphate aminotransferase subfamily. Homodimer. Pyridoxal 5'-phosphate is required as a cofactor.

It carries out the reaction L-histidinol phosphate + 2-oxoglutarate = 3-(imidazol-4-yl)-2-oxopropyl phosphate + L-glutamate. Its pathway is amino-acid biosynthesis; L-histidine biosynthesis; L-histidine from 5-phospho-alpha-D-ribose 1-diphosphate: step 7/9. The chain is Histidinol-phosphate aminotransferase from Mycobacterium leprae (strain Br4923).